The chain runs to 550 residues: Chaperonin GroEL (550 aa).

Residues 29–32 (TAGP), lysine 50, 86–90 (DGTTT), glycine 416, and aspartate 498 each bind ATP.

Belongs to the chaperonin (HSP60) family. As to quaternary structure, forms a cylinder of 14 subunits composed of two heptameric rings stacked back-to-back. Interacts with the co-chaperonin GroES.

The protein resides in the cytoplasm. It carries out the reaction ATP + H2O + a folded polypeptide = ADP + phosphate + an unfolded polypeptide.. Functionally, together with its co-chaperonin GroES, plays an essential role in assisting protein folding. The GroEL-GroES system forms a nano-cage that allows encapsulation of the non-native substrate proteins and provides a physical environment optimized to promote and accelerate protein folding. In Anaplasma phagocytophilum (strain HZ), this protein is Chaperonin GroEL.